Here is a 135-residue protein sequence, read N- to C-terminus: Large ribosomal subunit protein uL16c (135 aa).

The protein belongs to the universal ribosomal protein uL16 family. In terms of assembly, part of the 50S ribosomal subunit.

The protein resides in the plastid. Its subcellular location is the chloroplast. This Lepidium virginicum (Virginia pepperweed) protein is Large ribosomal subunit protein uL16c.